A 703-amino-acid chain; its full sequence is Polyribonucleotide nucleotidyltransferase (703 aa).

Residues aspartate 484 and aspartate 490 each contribute to the Mg(2+) site. The KH domain occupies 551-610 (PQMIRMQIDPDKIREVIGPGGKTIHKIVDETGCKIDIEDDGSLFIMATDEEAAKKARFFV). Residues 620–694 (GKTYMGTVKR…RQGRVNLSRK (75 aa)) enclose the S1 motif domain.

The protein belongs to the polyribonucleotide nucleotidyltransferase family. Mg(2+) serves as cofactor.

Its subcellular location is the cytoplasm. The enzyme catalyses RNA(n+1) + phosphate = RNA(n) + a ribonucleoside 5'-diphosphate. In terms of biological role, involved in mRNA degradation. Catalyzes the phosphorolysis of single-stranded polyribonucleotides processively in the 3'- to 5'-direction. The protein is Polyribonucleotide nucleotidyltransferase of Syntrophomonas wolfei subsp. wolfei (strain DSM 2245B / Goettingen).